Consider the following 407-residue polypeptide: Proteasome-activating nucleotidase (407 aa).

A coiled-coil region spans residues 22–67; the sequence is KEKTQIAELESKVLRLELKNKDVTRENVQIKKENEILKRELDKLRI. Residues 192–197 and H331 each bind ATP; that span reads GTGKTL. Residues 405-407 are docks into pockets in the proteasome alpha-ring to cause gate opening; the sequence is MYG.

Belongs to the AAA ATPase family. Homohexamer. The hexameric complex has a two-ring architecture resembling a top hat that caps the 20S proteasome core at one or both ends. Upon ATP-binding, the C-terminus of PAN interacts with the alpha-rings of the proteasome core by binding to the intersubunit pockets.

Its subcellular location is the cytoplasm. In terms of biological role, ATPase which is responsible for recognizing, binding, unfolding and translocation of substrate proteins into the archaeal 20S proteasome core particle. Is essential for opening the gate of the 20S proteasome via an interaction with its C-terminus, thereby allowing substrate entry and access to the site of proteolysis. Thus, the C-termini of the proteasomal ATPase function like a 'key in a lock' to induce gate opening and therefore regulate proteolysis. Unfolding activity requires energy from ATP hydrolysis, whereas ATP binding alone promotes ATPase-20S proteasome association which triggers gate opening, and supports translocation of unfolded substrates. In Methanococcus maripaludis (strain C7 / ATCC BAA-1331), this protein is Proteasome-activating nucleotidase.